The sequence spans 283 residues: Putative casein kinase II subunit beta-4 (283 aa).

Disordered regions lie at residues 1-23 (MYKD…EILG) and 35-92 (LDKH…SEGD). The segment covering 7-16 (GGGIMGGGGS) has biased composition (gly residues). The span at 58–70 (VPSTSTAKSQLHS) shows a compositional bias: polar residues.

The protein belongs to the casein kinase 2 subunit beta family. As to quaternary structure, heterotetramer of two catalytic alpha subunits and two regulatory beta subunits. Phosphorylated by alpha subunit.

It is found in the cytoplasm. Its subcellular location is the cytosol. Its function is as follows. Plays a complex role in regulating the basal catalytic activity of the alpha subunit. The tetrameric holoenzyme CK2, composed of two alpha and two beta subunits, phosphorylates the transcription factor PIF1 after an exposure to light, resulting in a proteasome-dependent degradation of PIF1 and promotion of photomorphogenesis. CK2 phosphorylates translation initiation factors. May participate in the regulation of the initiation of translation. The chain is Putative casein kinase II subunit beta-4 from Arabidopsis thaliana (Mouse-ear cress).